The following is a 583-amino-acid chain: Threonine--tRNA ligase (583 aa).

The segment at Asp-185–Pro-478 is catalytic. Positions 278, 329, and 455 each coordinate Zn(2+).

This sequence belongs to the class-II aminoacyl-tRNA synthetase family. As to quaternary structure, homodimer. Zn(2+) is required as a cofactor.

The protein localises to the cytoplasm. The enzyme catalyses tRNA(Thr) + L-threonine + ATP = L-threonyl-tRNA(Thr) + AMP + diphosphate + H(+). In terms of biological role, catalyzes the attachment of threonine to tRNA(Thr) in a two-step reaction: L-threonine is first activated by ATP to form Thr-AMP and then transferred to the acceptor end of tRNA(Thr). Also edits incorrectly charged L-seryl-tRNA(Thr). The polypeptide is Threonine--tRNA ligase (Borrelia recurrentis (strain A1)).